The sequence spans 209 residues: MADSKEIKRVLLGPLFDNNPIALQVLGVCSALAVTTKLETAVVMTIAVTLVTAFSSFFISLIRHHIPNSVRIIVQMAIIASLVIVVDQLLRAYAFEISKQLSVFVGLIITNCIVMGRAEAYAMKSPPIESFMDGIGNGLGYGVILVLVGFLRELFGSGKLFGIPVLETVQNGGWYQPNGLFLLAPSAFFIIGLLIWALRSLKPAQIEKE.

Helical transmembrane passes span 42 to 62, 66 to 86, 95 to 115, 131 to 151, and 178 to 198; these read VVMT…ISLI, IPNS…VIVV, FEIS…CIVM, FMDG…VGFL, and NGLF…IWAL.

It belongs to the NqrDE/RnfAE family. In terms of assembly, composed of six subunits; NqrA, NqrB, NqrC, NqrD, NqrE and NqrF.

It localises to the cell inner membrane. The catalysed reaction is a ubiquinone + n Na(+)(in) + NADH + H(+) = a ubiquinol + n Na(+)(out) + NAD(+). Its function is as follows. NQR complex catalyzes the reduction of ubiquinone-1 to ubiquinol by two successive reactions, coupled with the transport of Na(+) ions from the cytoplasm to the periplasm. NqrA to NqrE are probably involved in the second step, the conversion of ubisemiquinone to ubiquinol. The chain is Na(+)-translocating NADH-quinone reductase subunit D from Serratia proteamaculans (strain 568).